A 176-amino-acid chain; its full sequence is Beta-carotene hydroxylase (176 aa).

A Fatty acid hydroxylase domain is found at 10 to 126; the sequence is LSVIAMEGIA…AHRLHHAVRG (117 aa). Residues 152–176 are disordered; the sequence is HGRPPKRDAAKDRPDAASPSSSSPE. Over residues 156–166 the composition is skewed to basic and acidic residues; sequence PKRDAAKDRPD. Over residues 167–176 the composition is skewed to low complexity; that stretch reads AASPSSSSPE.

Belongs to the sterol desaturase family.

The protein operates within carotenoid biosynthesis; zeaxanthin biosynthesis. In terms of biological role, catalyzes the hydroxylation reaction from beta-carotene to zeaxanthin. The sequence is that of Beta-carotene hydroxylase (crtZ) from Pseudescherichia vulneris (Escherichia vulneris).